A 298-amino-acid polypeptide reads, in one-letter code: Ribosomal protein L11 methyltransferase (298 aa).

Positions 152, 176, 198, and 236 each coordinate S-adenosyl-L-methionine.

The protein belongs to the methyltransferase superfamily. PrmA family.

Its subcellular location is the cytoplasm. It carries out the reaction L-lysyl-[protein] + 3 S-adenosyl-L-methionine = N(6),N(6),N(6)-trimethyl-L-lysyl-[protein] + 3 S-adenosyl-L-homocysteine + 3 H(+). In terms of biological role, methylates ribosomal protein L11. This Polaromonas sp. (strain JS666 / ATCC BAA-500) protein is Ribosomal protein L11 methyltransferase.